Consider the following 317-residue polypeptide: uncharacterized protein (317 aa).

This is an uncharacterized protein from Borreliella burgdorferi (strain ATCC 35210 / DSM 4680 / CIP 102532 / B31) (Borrelia burgdorferi).